Reading from the N-terminus, the 344-residue chain is Nicotinate-nucleotide--dimethylbenzimidazole phosphoribosyltransferase (344 aa).

The active-site Proton acceptor is the E305.

The protein belongs to the CobT family.

It carries out the reaction 5,6-dimethylbenzimidazole + nicotinate beta-D-ribonucleotide = alpha-ribazole 5'-phosphate + nicotinate + H(+). It functions in the pathway nucleoside biosynthesis; alpha-ribazole biosynthesis; alpha-ribazole from 5,6-dimethylbenzimidazole: step 1/2. Functionally, catalyzes the synthesis of alpha-ribazole-5'-phosphate from nicotinate mononucleotide (NAMN) and 5,6-dimethylbenzimidazole (DMB). This Agrobacterium fabrum (strain C58 / ATCC 33970) (Agrobacterium tumefaciens (strain C58)) protein is Nicotinate-nucleotide--dimethylbenzimidazole phosphoribosyltransferase.